We begin with the raw amino-acid sequence, 91 residues long: MSVKIRLKRMGSKKRPFYRIVVADSRAPRDGRFITSVGTYNPLTTPKEVKFDEDAVMEWLQKGAQPSDTVRNMLQAAGVMKKYHEAKYAKK.

Belongs to the bacterial ribosomal protein bS16 family.

This is Small ribosomal subunit protein bS16 from Limosilactobacillus reuteri (strain DSM 20016) (Lactobacillus reuteri).